Consider the following 297-residue polypeptide: MSSTQDYIGEEAATRVKILSEALPYIQHFAGRTVVVKYGGAAMKDSNLKDKVIRDIVFMASVGIRPVVVHGGGPEINTWLDKVGIEPQFKDGLRVTDAATMDIVEMVLVGRVNKELVNLINQAGGKAVGLCGKDGQLMTARTMTNKDVGFVGEVSSVDARVVETLVKSGYIPVISSVAADEFGQAHNINADTCAGELAAALGAEKLILLTDTRGILRDYKDPSTLIHKLDIQQARELIGSGIVAGGMIPKVTCCVRSLAQGVRAAHILDGRLPHALLLEVFTDLGIGSMIVASGYDL.

Residues 72–73 (GG), Arg94, and Asn187 contribute to the substrate site.

This sequence belongs to the acetylglutamate kinase family. ArgB subfamily.

The protein localises to the cytoplasm. The catalysed reaction is N-acetyl-L-glutamate + ATP = N-acetyl-L-glutamyl 5-phosphate + ADP. It participates in amino-acid biosynthesis; L-arginine biosynthesis; N(2)-acetyl-L-ornithine from L-glutamate: step 2/4. Catalyzes the ATP-dependent phosphorylation of N-acetyl-L-glutamate. The protein is Acetylglutamate kinase of Synechocystis sp. (strain ATCC 27184 / PCC 6803 / Kazusa).